The sequence spans 187 residues: Ribosome maturation factor RimM (187 aa).

One can recognise a PRC barrel domain in the interval 96 to 169 (EDEFFYADLE…KLVIDPTAAG (74 aa)).

This sequence belongs to the RimM family. As to quaternary structure, binds ribosomal protein uS19.

The protein localises to the cytoplasm. Its function is as follows. An accessory protein needed during the final step in the assembly of 30S ribosomal subunit, possibly for assembly of the head region. Essential for efficient processing of 16S rRNA. May be needed both before and after RbfA during the maturation of 16S rRNA. It has affinity for free ribosomal 30S subunits but not for 70S ribosomes. This Rhizobium meliloti (strain 1021) (Ensifer meliloti) protein is Ribosome maturation factor RimM.